Reading from the N-terminus, the 519-residue chain is Laccase-2 (519 aa).

The first 20 residues, M1–A20, serve as a signal peptide directing secretion. Plastocyanin-like domains lie at I22–Y147 and V159–Y301. Residue N74 is glycosylated (N-linked (GlcNAc...) asparagine). H84, H86, H129, and H131 together coordinate Cu cation. Cystine bridges form between C105-C508 and C137-C225. Residues N161, N228, N237, N271, N353, and N361 are each glycosylated (N-linked (GlcNAc...) asparagine). Residues T368–D490 enclose the Plastocyanin-like 3 domain. The Cu cation site is built by H415, H418, and H420. N456 carries an N-linked (GlcNAc...) asparagine glycan. Cu cation-binding residues include H472, C473, H474, and H478.

Belongs to the multicopper oxidase family. Cu cation serves as cofactor.

The protein resides in the secreted. It carries out the reaction 4 hydroquinone + O2 = 4 benzosemiquinone + 2 H2O. Its function is as follows. Lignin degradation and detoxification of lignin-derived products. The polypeptide is Laccase-2 (LCC2) (Trametes versicolor (White-rot fungus)).